The chain runs to 65 residues: Sodium channel neurotoxin MeuNaTxalpha-9 (65 aa).

Residues 2 to 64 (RDGYIANDRN…VPIRIPGECR (63 aa)) form the LCN-type CS-alpha/beta domain. 4 disulfides stabilise this stretch: Cys-12/Cys-63, Cys-16/Cys-36, Cys-22/Cys-46, and Cys-26/Cys-48. An Arginine amide modification is found at Arg-64.

It belongs to the long (4 C-C) scorpion toxin superfamily. Sodium channel inhibitor family. Alpha subfamily. In terms of tissue distribution, expressed by the venom gland.

The protein localises to the secreted. Functionally, alpha toxins bind voltage-independently at site-3 of sodium channels (Nav) and inhibit the inactivation of the activated channels, thereby blocking neuronal transmission. This is Sodium channel neurotoxin MeuNaTxalpha-9 from Mesobuthus eupeus (Lesser Asian scorpion).